The chain runs to 79 residues: Conotoxin MIVA (79 aa).

An N-terminal signal peptide occupies residues 1 to 21 (MGMRMMFTVFLLVVLATTVVS). Residues 22–38 (IPSDRASDGRNAVVHER) constitute a propeptide that is removed on maturation. P40 is subject to 4-hydroxyproline. Residue E41 is modified to 4-carboxyglutamate. T45 and T47 each carry an O-linked (HexNAc...) threonine glycan. A 4-hydroxyproline mark is found at P55, P60, P61, P69, P70, and P74. P74 bears the Proline amide mark. Residues 75–79 (GRRND) constitute a propeptide that is removed on maturation.

Post-translationally, O-linked glycan consists of Hex4-HexNAc2 hexasaccharide. In terms of processing, contains 3 disulfide bonds. In terms of tissue distribution, expressed by the venom duct.

The protein localises to the secreted. Functionally, probable neurotoxin with ion channel inhibitor activity. In Conus magus (Magical cone), this protein is Conotoxin MIVA.